The primary structure comprises 566 residues: Myo-inositol transporter 1A (566 aa).

Residues 1–64 (MSDEKNYGIS…ERTEKLTKFV (64 aa)) are Cytoplasmic-facing. A helical transmembrane segment spans residues 65-85 (VGLALFASVSGFCFGFDTGVI). The Extracellular segment spans residues 86 to 106 (SAALVSIKDDFGHILDDTEKE). A helical transmembrane segment spans residues 107 to 127 (WISAATSCGALVGALSSGALA). At 128-140 (DRVGRKWTLAVGD) the chain is on the cytoplasmic side. A helical membrane pass occupies residues 141–161 (VWFTLGAIIICSSFSVVQMIV). The Extracellular segment spans residues 162 to 163 (GR). The chain crosses the membrane as a helical span at residues 164–184 (AVLGLGVGTAAAIAPLYIAEV). The Cytoplasmic segment spans residues 185–192 (APTRFRGA). A helical membrane pass occupies residues 193–213 (LVTVQSIAITGGQFFSYCIGI). Residues 214 to 222 (PLTGHNGWR) lie on the Extracellular side of the membrane. Residues 223-243 (IQFAIGIVPAVVQAAVVHFLP) traverse the membrane as a helical segment. At 244–313 (ESPRYDLLRG…VLTEGKYRKP (70 aa)) the chain is on the cytoplasmic side. A helical transmembrane segment spans residues 314–334 (AITALGIGIFQQLCGFNSLMY). Over 335 to 349 (YAATIFSYAGFDNPT) the chain is Extracellular. Residues 350–370 (SVGLIVSGTNWFFTFVAMMIL) form a helical membrane-spanning segment. Topologically, residues 371–377 (DRVGKRR) are cytoplasmic. Residues 378-398 (ILLSTYPGMIAGLALASVAFW) traverse the membrane as a helical segment. Topologically, residues 399–421 (KMTGSTGHRLVEGTEYPQQWSNM) are extracellular. The chain crosses the membrane as a helical span at residues 422 to 442 (MLGMMVVFIAFYATGSGNITW). Residues 443–458 (TVGEMFPLEMRGIGAS) are Cytoplasmic-facing. A helical membrane pass occupies residues 459 to 479 (ILAGGVWAANIVISATFLTLM). Topologically, residues 480–485 (NAIGPT) are extracellular. The helical transmembrane segment at 486–506 (PTFALYAGICLAGLIFIYFCY) threads the bilayer. At 507 to 566 (PEPSGLSLEEIQIIYNYGFGVQKSREIRAEHKLKAQEMRDRANSHIGGSATASDDQLNKV) the chain is on the cytoplasmic side. The interval 546–566 (DRANSHIGGSATASDDQLNKV) is disordered. Positions 556 to 566 (ATASDDQLNKV) are enriched in polar residues.

The protein belongs to the major facilitator superfamily. Sugar transporter (TC 2.A.1.1) family.

The protein resides in the cell membrane. It carries out the reaction myo-inositol(out) + H(+)(out) = myo-inositol(in) + H(+)(in). Major transporter for myo-inositol. Plays a role in the traversal of the host blood-brain barrier. This chain is Myo-inositol transporter 1A, found in Cryptococcus neoformans var. grubii serotype A (strain H99 / ATCC 208821 / CBS 10515 / FGSC 9487) (Filobasidiella neoformans var. grubii).